We begin with the raw amino-acid sequence, 58 residues long: MKIFIFIFIMALILAMIRADSSEEKRHRKRKKHHRGYFQQYQPYQRYPLNYPPAYPFP.

Residues 1-19 form the signal peptide; the sequence is MKIFIFIFIMALILAMIRA.

The protein belongs to the histatin/statherin family. Expressed in mammary glands.

The protein resides in the secreted. This chain is Histatherin, found in Bos taurus (Bovine).